The following is a 536-amino-acid chain: Transcription factor cheR (536 aa).

Residues 19–57 (CDRCHRHKLRCERSSVIVNGGVAVPLGPCKRCLKACIPC) constitute a DNA-binding region (zn(2)-C6 fungal-type). Disordered regions lie at residues 70–122 (AKTG…LSGT) and 220–243 (ALTD…PREE). Over residues 88 to 108 (AASPAKRAPSPARRPTASTPR) the composition is skewed to low complexity.

It is found in the nucleus. Transcription factor; part of the gene cluster that mediates the biosynthesis of chaetoglobosin A which has a unique inhibitory activity against actin polymerization in mammalian cells. Chaetoglobosin A and its intermediates are involved in the morphological differentiation of C.globosum. Binds directly to asymmetric direct repeats present in the promoters of the chaetoglobosin A cluster genes. This chain is Transcription factor cheR, found in Chaetomium globosum (strain ATCC 6205 / CBS 148.51 / DSM 1962 / NBRC 6347 / NRRL 1970) (Soil fungus).